The sequence spans 194 residues: Adenylate kinase (194 aa).

8 to 16 is a binding site for ATP; the sequence is GIPGVGKST.

This sequence belongs to the archaeal adenylate kinase family. In terms of assembly, homotrimer.

The protein resides in the cytoplasm. It catalyses the reaction AMP + ATP = 2 ADP. This is Adenylate kinase (adkA) from Sulfolobus acidocaldarius (strain ATCC 33909 / DSM 639 / JCM 8929 / NBRC 15157 / NCIMB 11770).